The following is a 25-amino-acid chain: Small ribosomal subunit protein eS32 (25 aa).

Residues 1-25 (MRAKWRKKRVRRLKRKRRKVRARSK) form a disordered region.

It belongs to the eukaryotic ribosomal protein eS32 family. As to quaternary structure, component of the small ribosomal subunit.

This chain is Small ribosomal subunit protein eS32 (RPL41), found in Eremothecium gossypii (strain ATCC 10895 / CBS 109.51 / FGSC 9923 / NRRL Y-1056) (Yeast).